Reading from the N-terminus, the 260-residue chain is Hydroxyethylthiazole kinase (260 aa).

Residue Met-38 participates in substrate binding. ATP-binding residues include Lys-114 and Ser-161. Position 188 (Gly-188) interacts with substrate.

The protein belongs to the Thz kinase family. Mg(2+) serves as cofactor.

It catalyses the reaction 5-(2-hydroxyethyl)-4-methylthiazole + ATP = 4-methyl-5-(2-phosphooxyethyl)-thiazole + ADP + H(+). The protein operates within cofactor biosynthesis; thiamine diphosphate biosynthesis; 4-methyl-5-(2-phosphoethyl)-thiazole from 5-(2-hydroxyethyl)-4-methylthiazole: step 1/1. Functionally, catalyzes the phosphorylation of the hydroxyl group of 4-methyl-5-beta-hydroxyethylthiazole (THZ). This chain is Hydroxyethylthiazole kinase, found in Campylobacter lari (strain RM2100 / D67 / ATCC BAA-1060).